The following is a 250-amino-acid chain: Small ribosomal subunit protein uS2 (250 aa).

The protein belongs to the universal ribosomal protein uS2 family.

This chain is Small ribosomal subunit protein uS2, found in Acidovorax sp. (strain JS42).